The sequence spans 341 residues: Ketol-acid reductoisomerase (NADP(+)) (341 aa).

The KARI N-terminal Rossmann domain occupies 1 to 182 (MATIYYDKDA…GCTRAGVLET (182 aa)). Residues 25-28 (YGSQ), serine 51, serine 53, and 83-86 (DQTQ) each bind NADP(+). Residue histidine 108 is part of the active site. Residue glycine 134 coordinates NADP(+). In terms of domain architecture, KARI C-terminal knotted spans 183–328 (TFKEETETDL…KRLRDMMSWI (146 aa)). Mg(2+) is bound by residues aspartate 191, glutamate 195, glutamate 227, and glutamate 231. Residue serine 252 coordinates substrate.

Belongs to the ketol-acid reductoisomerase family. Mg(2+) serves as cofactor.

The catalysed reaction is (2R)-2,3-dihydroxy-3-methylbutanoate + NADP(+) = (2S)-2-acetolactate + NADPH + H(+). The enzyme catalyses (2R,3R)-2,3-dihydroxy-3-methylpentanoate + NADP(+) = (S)-2-ethyl-2-hydroxy-3-oxobutanoate + NADPH + H(+). The protein operates within amino-acid biosynthesis; L-isoleucine biosynthesis; L-isoleucine from 2-oxobutanoate: step 2/4. It participates in amino-acid biosynthesis; L-valine biosynthesis; L-valine from pyruvate: step 2/4. Involved in the biosynthesis of branched-chain amino acids (BCAA). Catalyzes an alkyl-migration followed by a ketol-acid reduction of (S)-2-acetolactate (S2AL) to yield (R)-2,3-dihydroxy-isovalerate. In the isomerase reaction, S2AL is rearranged via a Mg-dependent methyl migration to produce 3-hydroxy-3-methyl-2-ketobutyrate (HMKB). In the reductase reaction, this 2-ketoacid undergoes a metal-dependent reduction by NADPH to yield (R)-2,3-dihydroxy-isovalerate. This Anaeromyxobacter dehalogenans (strain 2CP-C) protein is Ketol-acid reductoisomerase (NADP(+)).